Reading from the N-terminus, the 227-residue chain is 27 kDa A-type inclusion protein (227 aa).

The stretch at 4 to 210 (MPKQREMRRL…AECRRGNNGS (207 aa)) forms a coiled coil.

The chain is 27 kDa A-type inclusion protein from Bos taurus (Bovine).